The primary structure comprises 380 residues: MASLRKTHPLLKIVNDALIDLPAPANISVWWNFGSLLGLCLLTQILTGLFLAMHYTSDIATAFSSVAHICRDVNYGWLIRNFHANGASFFFICLYLHIGRGLYYGSYLYKETWNVGVVLFLLVMMTAFVGYVLPWGQMSFWGATVITNLLSAVPYVGDILVQWIWGGFSVDNATLTRFFAFHFLFPFIIAAMTILHFLFLHETGSNNPAGLNSDADKVSFHPYFSYKDLLGFVVMLLALSTLSLFSPNLLGDPDNFIPANPLVTPPHIKPEWYFLFAYAILRSIPNKLGGVLALLSSILILMLVPILHTSKQRGLTFRPLTQILFWVLVADVAILTWIGGMPVEHPFIIVGQVASVLYFALFLVIMPTTGWMENKALKWN.

4 consecutive transmembrane segments (helical) span residues 33-53 (FGSL…FLAM), 77-98 (WLIR…YLHI), 113-133 (WNVG…GYVL), and 178-198 (FFAF…LHFL). Residues histidine 83 and histidine 97 each contribute to the heme b site. 2 residues coordinate heme b: histidine 182 and histidine 196. Histidine 201 provides a ligand contact to a ubiquinone. 4 consecutive transmembrane segments (helical) span residues 226 to 246 (YKDL…SLFS), 288 to 308 (LGGV…PILH), 320 to 340 (LTQI…WIGG), and 347 to 367 (FIIV…VIMP).

Belongs to the cytochrome b family. The cytochrome bc1 complex contains 3 respiratory subunits (MT-CYB, CYC1 and UQCRFS1), 2 core proteins (UQCRC1 and UQCRC2) and probably 6 low-molecular weight proteins. Heme b serves as cofactor.

The protein localises to the mitochondrion inner membrane. Its function is as follows. Component of the ubiquinol-cytochrome c reductase complex (complex III or cytochrome b-c1 complex) that is part of the mitochondrial respiratory chain. The b-c1 complex mediates electron transfer from ubiquinol to cytochrome c. Contributes to the generation of a proton gradient across the mitochondrial membrane that is then used for ATP synthesis. This is Cytochrome b (mt-cyb) from Zeus faber (John Dory).